A 320-amino-acid polypeptide reads, in one-letter code: Putative malonate transporter (320 aa).

8 helical membrane passes run 1–21 (MAEI…GYLT), 32–52 (MGWL…FKLV), 65–85 (FILT…AIGL), 113–133 (GLAL…IFCF), 167–187 (IAFH…FLSF), 196–216 (LIDY…GVTL), 256–276 (IWVQ…VFVI), and 289–309 (ATIL…LYLI).

The protein belongs to the auxin efflux carrier (TC 2.A.69) family.

The protein localises to the cell membrane. The chain is Putative malonate transporter (mdcF) from Rhizobium meliloti (strain 1021) (Ensifer meliloti).